Reading from the N-terminus, the 426-residue chain is Isovaleryl-CoA dehydrogenase, mitochondrial (426 aa).

The N-terminal 32 residues, 1–32 (MATAAWLLGRRVASWRMRPPLQSLAGLITQRT), are a transit peptide targeting the mitochondrion. Residues lysine 58 and lysine 78 each carry the N6-acetyllysine; alternate modification. N6-succinyllysine; alternate occurs at positions 58 and 78. Residues 165–174 (LAMSEPNAGS) and 198–200 (WIT) contribute to the FAD site. Serine 174 contacts substrate. Substrate is bound at residue 222–223 (SR). The residue at position 241 (lysine 241) is an N6-acetyllysine. Residues tyrosine 277 and 284 to 287 (DLER) contribute to the substrate site. Residue glutamate 286 is the Proton acceptor of the active site. Arginine 312 is an FAD binding site. Lysine 318 is subject to N6-succinyllysine. Residues glutamine 323 and 380 to 384 (QCLGG) each bind FAD. 407–408 (AG) contacts substrate. Residue 409 to 411 (TSE) coordinates FAD.

This sequence belongs to the acyl-CoA dehydrogenase family. As to quaternary structure, homotetramer. It depends on FAD as a cofactor.

It localises to the mitochondrion matrix. The enzyme catalyses 3-methylbutanoyl-CoA + oxidized [electron-transfer flavoprotein] + H(+) = 3-methylbut-2-enoyl-CoA + reduced [electron-transfer flavoprotein]. It catalyses the reaction pentanoyl-CoA + oxidized [electron-transfer flavoprotein] + H(+) = (2E)-pentenoyl-CoA + reduced [electron-transfer flavoprotein]. The catalysed reaction is hexanoyl-CoA + oxidized [electron-transfer flavoprotein] + H(+) = (2E)-hexenoyl-CoA + reduced [electron-transfer flavoprotein]. It carries out the reaction butanoyl-CoA + oxidized [electron-transfer flavoprotein] + H(+) = (2E)-butenoyl-CoA + reduced [electron-transfer flavoprotein]. It functions in the pathway amino-acid degradation; L-leucine degradation; (S)-3-hydroxy-3-methylglutaryl-CoA from 3-isovaleryl-CoA: step 1/3. Functionally, catalyzes the conversion of isovaleryl-CoA/3-methylbutanoyl-CoA to 3-methylbut-2-enoyl-CoA as an intermediate step in the leucine (Leu) catabolic pathway. To a lesser extent, is also able to catalyze the oxidation of other saturated short-chain acyl-CoA thioesters as pentanoyl-CoA, hexenoyl-CoA and butenoyl-CoA. This chain is Isovaleryl-CoA dehydrogenase, mitochondrial (IVD), found in Bos taurus (Bovine).